The chain runs to 143 residues: Transcription antitermination protein NusB (143 aa).

The protein belongs to the NusB family.

Its function is as follows. Involved in transcription antitermination. Required for transcription of ribosomal RNA (rRNA) genes. Binds specifically to the boxA antiterminator sequence of the ribosomal RNA (rrn) operons. The sequence is that of Transcription antitermination protein NusB from Clostridium botulinum (strain ATCC 19397 / Type A).